The sequence spans 356 residues: Tyrosine recombinase XerS (356 aa).

The 106-residue stretch at 16-121 folds into the Core-binding (CB) domain; the sequence is IMPWYVLDYY…ALSSLYKYLT (106 aa). The Tyr recombinase domain maps to 169-354; that stretch reads AFLDYVDKEY…VNDEQKNALD (186 aa). Residues R210, K234, H306, R309, and H332 contribute to the active site. Residue Y341 is the O-(3'-phospho-DNA)-tyrosine intermediate of the active site.

Belongs to the 'phage' integrase family. XerS subfamily.

The protein localises to the cytoplasm. FtsK is required for recombination. Functionally, site-specific tyrosine recombinase, which acts by catalyzing the cutting and rejoining of the recombining DNA molecules. Essential to convert dimers of the bacterial chromosome into monomers to permit their segregation at cell division. The chain is Tyrosine recombinase XerS from Streptococcus equi subsp. equi (strain 4047).